A 102-amino-acid chain; its full sequence is Small ribosomal subunit protein uS10 (102 aa).

The interval Gln34–Lys59 is disordered.

It belongs to the universal ribosomal protein uS10 family. In terms of assembly, part of the 30S ribosomal subunit.

In terms of biological role, involved in the binding of tRNA to the ribosomes. In Methanopyrus kandleri (strain AV19 / DSM 6324 / JCM 9639 / NBRC 100938), this protein is Small ribosomal subunit protein uS10.